A 282-amino-acid polypeptide reads, in one-letter code: D-alanine aminotransferase (282 aa).

Tyr-32 provides a ligand contact to substrate. Arg-51 is a binding site for pyridoxal 5'-phosphate. Positions 99 and 101 each coordinate substrate. Catalysis depends on Lys-146, which acts as the Proton acceptor. Lys-146 carries the post-translational modification N6-(pyridoxal phosphate)lysine. Glu-178 is a pyridoxal 5'-phosphate binding site.

It belongs to the class-IV pyridoxal-phosphate-dependent aminotransferase family. As to quaternary structure, homodimer. Pyridoxal 5'-phosphate serves as cofactor.

The catalysed reaction is D-alanine + 2-oxoglutarate = D-glutamate + pyruvate. Acts on the D-isomers of alanine, leucine, aspartate, glutamate, aminobutyrate, norvaline and asparagine. The enzyme transfers an amino group from a substrate D-amino acid to the pyridoxal phosphate cofactor to form pyridoxamine and an alpha-keto acid in the first half-reaction. The second half-reaction is the reverse of the first, transferring the amino group from the pyridoxamine to a second alpha-keto acid to form the product D-amino acid via a ping-pong mechanism. This is an important process in the formation of D-alanine and D-glutamate, which are essential bacterial cell wall components. The sequence is that of D-alanine aminotransferase (dat) from Staphylococcus epidermidis (strain ATCC 35984 / DSM 28319 / BCRC 17069 / CCUG 31568 / BM 3577 / RP62A).